Here is a 160-residue protein sequence, read N- to C-terminus: MGRFILVNLGLLVVAFSLRGSEACCPCGWSSYDKYCYKVFDKRKNWDDAERFCMEQGKGGHLAALGSLEEGKFVGKLAFKKLKEHPTYVWIGLRAQGQGQQCSSRWSDGSRILYENWHPLQSKKCIALSKWTEYLKWYNHICDFTLPFICKFLAEPDDPE.

The N-terminal stretch at 1-23 (MGRFILVNLGLLVVAFSLRGSEA) is a signal peptide. Intrachain disulfides connect cysteine 25-cysteine 36, cysteine 53-cysteine 150, and cysteine 125-cysteine 142. In terms of domain architecture, C-type lectin spans 32–151 (YDKYCYKVFD…CDFTLPFICK (120 aa)).

The protein belongs to the snaclec family. In terms of assembly, heterodimer of subunits A and B; disulfide-linked. In terms of tissue distribution, expressed by the venom gland.

Its subcellular location is the secreted. Its function is as follows. Interferes with one step of hemostasis (modulation of platelet aggregation, or coagulation cascade, for example). The protein is Snaclec subunit A of Philodryas olfersii (Green snake).